A 153-amino-acid polypeptide reads, in one-letter code: Natriuretic peptides A (153 aa).

An N-terminal signal peptide occupies residues M1–A25. Propeptides lie at residues N26 to R123 and D93 to D103. A disordered region spans residues V62–S104. S129 bears the Phosphoserine mark. Cysteines 130 and 146 form a disulfide. The important for degradation of atrial natriuretic peptide by IDE stretch occupies residues N147–Y151.

It belongs to the natriuretic peptide family. In terms of assembly, homodimer; disulfide-linked antiparallel dimer. The precursor molecule is proteolytically cleaved by CORIN at Arg-123 to produce the atrial natriuretic peptide. Undergoes further proteolytic cleavage by unknown proteases to give rise to long-acting natriuretic peptide, vessel dilator and kaliuretic peptide. Additional processing gives rise to the auriculin and atriopeptin peptides. In the kidneys, alternative processing by an unknown protease results in the peptide urodilatin. In terms of processing, cleavage by MME initiates degradation of the factor and thereby regulates its activity. Degradation by IDE results in reduced activation of NPR1 (in vitro). During IDE degradation, the resulting products can temporarily stimulate NPR2 to produce cGMP, before the fragments are completely degraded and inactivated by IDE (in vitro). Post-translationally, degraded by IDE. Phosphorylation on Ser-129 decreases vasorelaxant activity.

The protein localises to the secreted. It localises to the perikaryon. The protein resides in the cell projection. Functionally, hormone that plays a key role in mediating cardio-renal homeostasis, and is involved in vascular remodeling and regulating energy metabolism. Acts by specifically binding and stimulating NPR1 to produce cGMP, which in turn activates effector proteins, such as PRKG1, that drive various biological responses. Regulates vasodilation, natriuresis, diuresis and aldosterone synthesis and is therefore essential for regulating blood pressure, controlling the extracellular fluid volume and maintaining the fluid-electrolyte balance. Also involved in inhibiting cardiac remodeling and cardiac hypertrophy by inducing cardiomyocyte apoptosis and attenuating the growth of cardiomyocytes and fibroblasts. Plays a role in female pregnancy by promoting trophoblast invasion and spiral artery remodeling in uterus, and thus prevents pregnancy-induced hypertension. In adipose tissue, acts in various cGMP- and PKG-dependent pathways to regulate lipid metabolism and energy homeostasis. This includes up-regulating lipid metabolism and mitochondrial oxygen utilization by activating the AMP-activated protein kinase (AMPK), and increasing energy expenditure by acting via MAPK11 to promote the UCP1-dependent thermogenesis of brown adipose tissue. Binds the clearance receptor NPR3 which removes the hormone from circulation. In terms of biological role, may have a role in cardio-renal homeostasis through regulation of natriuresis, diuresis, vasodilation, and inhibiting aldosterone synthesis. In vitro, promotes the production of cGMP and induces vasodilation. May promote natriuresis, at least in part, by enhancing prostaglandin E2 synthesis resulting in the inhibition of renal Na+-K+-ATPase. However reports on the involvement of this peptide in mammal blood volume and blood pressure homeostasis are conflicting; according to a report, in vivo it is not sufficient to activate cGMP and does not inhibit collecting duct transport nor effect diuresis and natriuresis. Appears to bind to specific receptors that are distinct from the receptors bound by atrial natriuretic peptide and vessel dilator. Possibly enhances protein excretion in urine by decreasing proximal tubular protein reabsorption. Its function is as follows. May have a role in cardio-renal homeostasis through regulation of natriuresis, diuresis, and vasodilation. In vitro, promotes the production of cGMP and induces vasodilation. May promote natriuresis, at least in part, by enhancing prostaglandin E2 synthesis resulting in the inhibition of renal Na+-K+-ATPase. However reports on the involvement of this peptide in mammal blood volume and blood pressure homeostasis are conflicting; according to a report it is not sufficient to activate cGMP and does not inhibit collecting duct transport nor effect diuresis and natriuresis. Appears to bind to specific receptors that are distinct from the receptors bound by the atrial natriuretic and long-acting natriuretic peptides. Possibly functions in protein excretion in urine by maintaining the integrity of the proximal tubules and enhancing protein excretion by decreasing proximal tubular protein reabsorption. May have a role in cardio-renal homeostasis through regulation of diuresis and inhibiting aldosterone synthesis. In vitro, promotes the production of cGMP and induces vasodilation. May promote natriuresis, at least in part, by enhancing prostaglandin E2 synthesis resulting in the inhibition of renal Na+-K+-ATPase. May have a role in potassium excretion but not sodium excretion (natriuresis). Possibly enhances protein excretion in urine by decreasing proximal tubular protein reabsorption. Functionally, hormone produced in the kidneys that appears to be important for maintaining cardio-renal homeostasis. Mediates vasodilation, natriuresis and diuresis primarily in the renal system, in order to maintain the extracellular fluid volume and control the fluid-electrolyte balance. Specifically binds and stimulates cGMP production by renal transmembrane receptors, likely NPR1. Urodilatin not ANP, may be the natriuretic peptide responsible for the regulation of sodium and water homeostasis in the kidney. In terms of biological role, may have a role in cardio-renal homeostasis through regulation of natriuresis and vasodilation. In vivo promotes natriuresis and in vitro, vasodilates renal artery strips. Its function is as follows. May have a role in cardio-renal homeostasis through regulation of regulation of natriuresis and vasodilation. In vivo promotes natriuresis. In vitro, vasodilates intestinal smooth muscle but not smooth muscle strips. May have a role in cardio-renal homeostasis through regulation of natriuresis and vasodilation. In vivo promotes natriuresis. In vitro, selectively vasodilates intestinal and vascular smooth muscle strips. Functionally, may have a role in cardio-renal homeostasis through regulation of natriuresis and vasodilation. In vivo promotes natriuresis. In vitro, selectively vasodilates intestinal smooth muscle but not vascular smooth muscle strips. This is Natriuretic peptides A (NPPA) from Felis catus (Cat).